Here is a 484-residue protein sequence, read N- to C-terminus: MKKGIRYETSRKTSYIFQQPQHGPWQTRMRKISNHGSLRVAKVAYPLGLCVGVFIYVAYIKWHRATATQAFFSITRAAPGARWGQQAHSPLGTAADGHEVFYGIMFDAGSTGTRVHVFQFTRPPRETPTLTHETFKALKPGLSAYADDVEKSAQGIRELLDVAKQDIPFDFWKATPLVLKATAGLRLLPGEKAQKLLQKVKKVFKASPFLVGDDCVSIMNGTDEGVSAWITINFLTGSLKTPGGSSVGMLDLGGGSTQIAFLPRVEGTLQASPPGYLTALRMFNRTYKLYSYSYLGLGLMSARLAILGGVEGQPAKDGKELVSPCLSPSFKGEWEHAEVTYRVSGQKAAASLHELCAARVSEVLQNRVHRTEEVKHVDFYAFSYYYDLAAGVGLIDAEKGGSLVVGDFEIAAKYVCRTLETQPQSSPFSCMDLTYVSLLLQEFGFPRSKVLKLTRKIDNVETSWALGAIFHYIDSLNRQKSPAS.

The Cytoplasmic segment spans residues 1–39 (MKKGIRYETSRKTSYIFQQPQHGPWQTRMRKISNHGSLR). A helical; Signal-anchor for type II membrane protein membrane pass occupies residues 40 to 60 (VAKVAYPLGLCVGVFIYVAYI). Over 61 to 484 (KWHRATATQA…SLNRQKSPAS (424 aa)) the chain is Lumenal. Asn220 carries N-linked (GlcNAc...) asparagine glycosylation. The active-site Proton acceptor is the Glu224. Asn284 carries an N-linked (GlcNAc...) asparagine glycan. 2 disulfides stabilise this stretch: Cys325/Cys356 and Cys416/Cys430.

The protein belongs to the GDA1/CD39 NTPase family. In terms of assembly, monomer. It depends on Ca(2+) as a cofactor. Mg(2+) serves as cofactor. In terms of processing, the secreted form may be produced by intracellular processing. N-glycosylated. As to expression, expressed in most tissues, but predominantly in heart.

Its subcellular location is the golgi apparatus membrane. It is found in the secreted. The protein resides in the cell membrane. The catalysed reaction is a ribonucleoside 5'-diphosphate + H2O = a ribonucleoside 5'-phosphate + phosphate + H(+). It carries out the reaction IDP + H2O = IMP + phosphate + H(+). The enzyme catalyses GDP + H2O = GMP + phosphate + H(+). It catalyses the reaction UDP + H2O = UMP + phosphate + H(+). With respect to regulation, glycosylation does not appear to be required for enzymatic activity. Catalyzes the hydrolysis of nucleoside triphosphates and diphosphates in a calcium- or magnesium-dependent manner. Has a strong preference for nucleoside diphosphates, preferentially hydrolyzes GDP, IDP, and UDP, with slower hydrolysis of CDP, ITP, GTP, CTP, ADP, and UTP and virtually no hydrolysis of ATP. The membrane bound form might support glycosylation reactions in the Golgi apparatus and, when released from cells, might catalyze the hydrolysis of extracellular nucleotides. The protein is Ectonucleoside triphosphate diphosphohydrolase 6 (ENTPD6) of Homo sapiens (Human).